The following is a 421-amino-acid chain: U-box domain-containing protein 25 (421 aa).

One can recognise a U-box domain in the interval 13 to 88 (QIPYHFRCPI…QEWCVANRSN (76 aa)).

The enzyme catalyses S-ubiquitinyl-[E2 ubiquitin-conjugating enzyme]-L-cysteine + [acceptor protein]-L-lysine = [E2 ubiquitin-conjugating enzyme]-L-cysteine + N(6)-ubiquitinyl-[acceptor protein]-L-lysine.. It functions in the pathway protein modification; protein ubiquitination. Functionally, functions as an E3 ubiquitin ligase. In Arabidopsis thaliana (Mouse-ear cress), this protein is U-box domain-containing protein 25 (PUB25).